We begin with the raw amino-acid sequence, 108 residues long: MIITTTENIHGYEIVEILGIVMGNIVQSKHLGKDIAAAFKTLAGGEIKAYTEMMTEARNKAIERMIDEAEKIGADAVVNVRFSSSSVMSGAAEMLAYGTAVKIKKSNE.

It belongs to the UPF0145 family.

The sequence is that of UPF0145 protein THA_1434 from Thermosipho africanus (strain TCF52B).